The chain runs to 1183 residues: SR-related and CTD-associated factor 4 (1183 aa).

Positions 1 to 139 (MDAVNAFNQE…PLLDMAAGTS (139 aa)) constitute a CID domain. At Lys-49 the chain carries N6-acetyllysine. Ser-154 bears the Phosphoserine mark. Disordered regions lie at residues 299 to 324 (VPVP…VQQP) and 348 to 561 (HHQV…QIKS). A compositionally biased stretch (pro residues) spans 367–380 (APPPFPPMPQPGMP). Low complexity predominate over residues 381–398 (QPGMAQPGLAQPGMAQPT). Pro residues predominate over residues 399 to 410 (MPQPGMPQPGMP). A compositionally biased stretch (low complexity) spans 411–428 (QPGMAQPGLAQPGMAQPG). A compositionally biased stretch (pro residues) spans 429-440 (MPQPAMPQPAMP). Over residues 457 to 469 (PTFQSTFQPQNEP) the composition is skewed to polar residues. Positions 488 to 498 (EVKRHVPESRK) are enriched in basic and acidic residues. A compositionally biased stretch (basic residues) spans 499-536 (SRSRSPKRRRSRSGSRSRRSRHRRSRSRSRDRRRHSPR). Residues 538–553 (RSQERRDREKERERRQ) show a composition bias toward basic and acidic residues. The RRM domain occupies 569–643 (TTLWVGQLDK…KSIKIAWALN (75 aa)). 3 disordered regions span residues 691 to 722 (WKGI…IPKP), 800 to 858 (LPPG…SLPT), and 920 to 1183 (MPPH…EPPR). Ser-717 bears the Phosphoserine mark. 2 stretches are compositionally biased toward pro residues: residues 800–823 (LPPG…PPIS) and 920–952 (MPPH…PPHG). Over residues 1006 to 1020 (SPSQQPAPAQQQPPQ) the composition is skewed to low complexity. Ser-1042 is modified (phosphoserine). Basic and acidic residues predominate over residues 1047–1122 (VENDRERYGS…NRKEKHEVAD (76 aa)). Over residues 1136–1145 (QVGTIDTVSE) the composition is skewed to polar residues.

Interacts with POLR2A; via C-terminal heptapeptide repeat domain (CTD) phosphorylated at 'Ser-2' and 'Ser-5'.

The protein resides in the nucleus. Functionally, anti-terminator protein required to prevent early mRNA termination during transcription. Together with SCAF8, acts by suppressing the use of early, alternative poly(A) sites, thereby preventing the accumulation of non-functional truncated proteins. Mechanistically, associates with the phosphorylated C-terminal heptapeptide repeat domain (CTD) of the largest RNA polymerase II subunit (POLR2A), and subsequently binds nascent RNA upstream of early polyadenylation sites to prevent premature mRNA transcript cleavage and polyadenylation. Independently of SCAF8, also acts as a suppressor of transcriptional readthrough. The protein is SR-related and CTD-associated factor 4 of Mus musculus (Mouse).